Here is a 142-residue protein sequence, read N- to C-terminus: Large ribosomal subunit protein bL17 (142 aa).

This sequence belongs to the bacterial ribosomal protein bL17 family. In terms of assembly, part of the 50S ribosomal subunit. Contacts protein L32.

This is Large ribosomal subunit protein bL17 from Chlamydia felis (strain Fe/C-56) (Chlamydophila felis).